Reading from the N-terminus, the 252-residue chain is Phosphoglycolate phosphatase (252 aa).

Residue aspartate 13 is the Nucleophile of the active site. Mg(2+)-binding residues include aspartate 13, aspartate 15, and aspartate 192.

Belongs to the HAD-like hydrolase superfamily. CbbY/CbbZ/Gph/YieH family. In terms of assembly, monomer. The cofactor is Mg(2+). Chloride serves as cofactor.

It carries out the reaction 2-phosphoglycolate + H2O = glycolate + phosphate. It participates in organic acid metabolism; glycolate biosynthesis; glycolate from 2-phosphoglycolate: step 1/1. In terms of biological role, specifically catalyzes the dephosphorylation of 2-phosphoglycolate. Is involved in the dissimilation of the intracellular 2-phosphoglycolate formed during the DNA repair of 3'-phosphoglycolate ends, a major class of DNA lesions induced by oxidative stress. The sequence is that of Phosphoglycolate phosphatase from Escherichia coli O157:H7.